Reading from the N-terminus, the 144-residue chain is Large ribosomal subunit protein uL15 (144 aa).

Residues 1-51 are disordered; the sequence is MQLNTLSPAQGEKKSRKRVGRGIGSGIGKTCGSGHKGQKSRSGGFNKIGFE. Residues 21-35 are compositionally biased toward gly residues; that stretch reads RGIGSGIGKTCGSGH.

This sequence belongs to the universal ribosomal protein uL15 family. Part of the 50S ribosomal subunit.

Binds to the 23S rRNA. This is Large ribosomal subunit protein uL15 from Vesicomyosocius okutanii subsp. Calyptogena okutanii (strain HA).